The primary structure comprises 115 residues: NADH-ubiquinone oxidoreductase chain 3 (115 aa).

Helical transmembrane passes span 4–24 (IMAMLANISISSCLIIIAFWL), 55–75 (FFLVGITFLLFDLEIALLLPL), and 84–104 (MFLTTLTSFILVSVLALGLAY).

It belongs to the complex I subunit 3 family. Core subunit of respiratory chain NADH dehydrogenase (Complex I) which is composed of 45 different subunits. Interacts with TMEM186. Interacts with TMEM242.

It is found in the mitochondrion inner membrane. The enzyme catalyses a ubiquinone + NADH + 5 H(+)(in) = a ubiquinol + NAD(+) + 4 H(+)(out). Core subunit of the mitochondrial membrane respiratory chain NADH dehydrogenase (Complex I) which catalyzes electron transfer from NADH through the respiratory chain, using ubiquinone as an electron acceptor. Essential for the catalytic activity of complex I. In Phyllotis darwinii (Darwin's leaf-eared mouse), this protein is NADH-ubiquinone oxidoreductase chain 3.